The chain runs to 174 residues: MATGRRKANRTKKEETNWQERVIQIRRVSKVVKGGKKLSFRAIVVVGNERGQVGVGVGKASDVIGAVKKGVADGKKHLIDIPITKSNSIPHPIDGVGGGAKVMMRPAAPGTGVIAGGAVRTVLELAGVRNVLAKQLGSNNPLNNARAAVNALSTLRTLAEVAEDRGIAIEKLYI.

The S5 DRBM domain maps to 18-81; sequence WQERVIQIRR…ADGKKHLIDI (64 aa).

It belongs to the universal ribosomal protein uS5 family. Part of the 30S ribosomal subunit. Contacts proteins S4 and S8.

Functionally, with S4 and S12 plays an important role in translational accuracy. Its function is as follows. Located at the back of the 30S subunit body where it stabilizes the conformation of the head with respect to the body. This is Small ribosomal subunit protein uS5 from Trichormus variabilis (strain ATCC 29413 / PCC 7937) (Anabaena variabilis).